A 92-amino-acid polypeptide reads, in one-letter code: Small ribosomal subunit protein uS19 (92 aa).

The protein belongs to the universal ribosomal protein uS19 family.

Functionally, protein S19 forms a complex with S13 that binds strongly to the 16S ribosomal RNA. The sequence is that of Small ribosomal subunit protein uS19 from Leptospira biflexa serovar Patoc (strain Patoc 1 / Ames).